The following is a 629-amino-acid chain: Interleukin-23 receptor (629 aa).

The N-terminal stretch at Met-1 to Gly-23 is a signal peptide. The Extracellular portion of the chain corresponds to Gly-24–Gly-355. N-linked (GlcNAc...) asparagine; partial glycosylation is present at Asn-29. N-linked (GlcNAc...) asparagine glycans are attached at residues Asn-47, Asn-81, and Asn-141. 2 Fibronectin type-III domains span residues Ile-127–Ile-217 and Ile-219–Thr-318. A glycan (N-linked (GlcNAc...) (high mannose) asparagine) is linked at Asn-180. N-linked (GlcNAc...) asparagine glycosylation is found at Asn-232 and Asn-262. Asn-273 carries an N-linked (GlcNAc...) asparagine; partial glycan. The chain crosses the membrane as a helical span at residues Leu-356–Phe-376. Over Asn-377–Lys-629 the chain is Cytoplasmic.

This sequence belongs to the type I cytokine receptor family. Type 2 subfamily. Heterodimer with IL12RB1. In presence of IL23, the heterodimer forms the IL23 receptor. Interacts with JAK2 and in presence of IL23 with STAT3. Phosphorylated in response to IL23. In terms of tissue distribution, expressed by monocytes, Th1, Th0, NK and dendritic cells. Isoform 1 is specifically expressed in NK cells.

Its subcellular location is the cell membrane. Its function is as follows. Associates with IL12RB1 to form the interleukin-23 receptor. Binds IL23 and mediates T-cells, NK cells and possibly certain macrophage/myeloid cells stimulation probably through activation of the Jak-Stat signaling cascade. IL23 functions in innate and adaptive immunity and may participate in acute response to infection in peripheral tissues. IL23 may be responsible for autoimmune inflammatory diseases and be important for tumorigenesis. This chain is Interleukin-23 receptor (IL23R), found in Homo sapiens (Human).